The chain runs to 452 residues: Na(+)/H(+) antiporter NhaA (452 aa).

A run of 11 helical transmembrane segments spans residues 27 to 47, 78 to 98, 114 to 134, 141 to 161, 172 to 192, 201 to 221, 222 to 242, 316 to 336, 346 to 366, 388 to 408, and 421 to 441; these read FLHI…TALI, LHFW…GMEI, ILPI…YLSF, IYGW…ILAL, IILL…IAFF, GLAI…ISFA, SAWL…VTGI, PWVA…VSFA, FLIV…GILA, ILLI…VSML, and IGVL…GLIY.

This sequence belongs to the NhaA Na(+)/H(+) (TC 2.A.33) antiporter family.

Its subcellular location is the cell inner membrane. The catalysed reaction is Na(+)(in) + 2 H(+)(out) = Na(+)(out) + 2 H(+)(in). Its function is as follows. Na(+)/H(+) antiporter that extrudes sodium in exchange for external protons. In Bartonella bacilliformis (strain ATCC 35685 / KC583 / Herrer 020/F12,63), this protein is Na(+)/H(+) antiporter NhaA.